A 226-amino-acid chain; its full sequence is Fibrillarin-like rRNA/tRNA 2'-O-methyltransferase (226 aa).

Residues 82-83, 100-101, 125-126, and 145-148 contribute to the S-adenosyl-L-methionine site; these read TT, EF, DA, and DVAQ.

It belongs to the methyltransferase superfamily. Fibrillarin family. In terms of assembly, interacts with nop5. Component of box C/D small ribonucleoprotein (sRNP) particles that contain rpl7ae, FlpA and nop5, plus a guide RNA.

Functionally, involved in pre-rRNA and tRNA processing. Utilizes the methyl donor S-adenosyl-L-methionine to catalyze the site-specific 2'-hydroxyl methylation of ribose moieties in rRNA and tRNA. Site specificity is provided by a guide RNA that base pairs with the substrate. Methylation occurs at a characteristic distance from the sequence involved in base pairing with the guide RNA. The sequence is that of Fibrillarin-like rRNA/tRNA 2'-O-methyltransferase from Methanosarcina barkeri (strain Fusaro / DSM 804).